We begin with the raw amino-acid sequence, 99 residues long: NADH-quinone oxidoreductase subunit K (99 aa).

3 consecutive transmembrane segments (helical) span residues 2–22 (PVEYYLWLAAILFGIGLLGVL), 28–48 (LILMMSVELMLNAANLTFLAF), and 60–80 (IAFFVIAVAAAEAAVGLAVVI).

Belongs to the complex I subunit 4L family. In terms of assembly, NDH-1 is composed of 14 different subunits. Subunits NuoA, H, J, K, L, M, N constitute the membrane sector of the complex.

It localises to the cell inner membrane. It carries out the reaction a quinone + NADH + 5 H(+)(in) = a quinol + NAD(+) + 4 H(+)(out). Its function is as follows. NDH-1 shuttles electrons from NADH, via FMN and iron-sulfur (Fe-S) centers, to quinones in the respiratory chain. The immediate electron acceptor for the enzyme in this species is believed to be ubiquinone. Couples the redox reaction to proton translocation (for every two electrons transferred, four hydrogen ions are translocated across the cytoplasmic membrane), and thus conserves the redox energy in a proton gradient. This chain is NADH-quinone oxidoreductase subunit K, found in Anaeromyxobacter dehalogenans (strain 2CP-1 / ATCC BAA-258).